A 932-amino-acid chain; its full sequence is UPF0182 protein Syncc9902_1151 (932 aa).

9 consecutive transmembrane segments (helical) span residues 4–24 (FLWI…VEWV), 40–60 (MLQL…VLWL), 85–105 (VLMV…DLAI), 124–144 (MASE…VSLC), 151–171 (WVAV…WGVW), 201–221 (IQLG…HAVW), 243–263 (YRWL…LVWL), 293–313 (LLAF…IGHL), and 315–335 (RLLL…TPLT).

Belongs to the UPF0182 family.

It localises to the cell membrane. This chain is UPF0182 protein Syncc9902_1151, found in Synechococcus sp. (strain CC9902).